The following is a 594-amino-acid chain: UvrABC system protein C (594 aa).

In terms of domain architecture, GIY-YIG spans 14 to 91 (DSPGCYLHKD…IQENMPKYNI (78 aa)). The 36-residue stretch at 196-231 (DKIIDDLRSKMLEASHNQEFERAAEYRDLISGIATM) folds into the UVR domain.

It belongs to the UvrC family. In terms of assembly, interacts with UvrB in an incision complex.

The protein localises to the cytoplasm. Functionally, the UvrABC repair system catalyzes the recognition and processing of DNA lesions. UvrC both incises the 5' and 3' sides of the lesion. The N-terminal half is responsible for the 3' incision and the C-terminal half is responsible for the 5' incision. The polypeptide is UvrABC system protein C (Streptococcus equi subsp. equi (strain 4047)).